Reading from the N-terminus, the 346-residue chain is Holliday junction branch migration complex subunit RuvB (346 aa).

Residues 1-181 (MSDRNPLIDA…FGIPVRLNFY (181 aa)) form a large ATPase domain (RuvB-L) region. Residues leucine 20, arginine 21, glycine 62, lysine 65, threonine 66, threonine 67, 128 to 130 (EDF), arginine 171, tyrosine 181, and arginine 218 contribute to the ATP site. Threonine 66 contacts Mg(2+). The segment at 182–252 (TVEELEYIVR…IADEALSRLE (71 aa)) is small ATPAse domain (RuvB-S). Residues 255 to 346 (NRGLDQLDRR…SQYGLFMEDE (92 aa)) form a head domain (RuvB-H) region. DNA contacts are provided by arginine 291, arginine 310, and arginine 315.

Belongs to the RuvB family. Homohexamer. Forms an RuvA(8)-RuvB(12)-Holliday junction (HJ) complex. HJ DNA is sandwiched between 2 RuvA tetramers; dsDNA enters through RuvA and exits via RuvB. An RuvB hexamer assembles on each DNA strand where it exits the tetramer. Each RuvB hexamer is contacted by two RuvA subunits (via domain III) on 2 adjacent RuvB subunits; this complex drives branch migration. In the full resolvosome a probable DNA-RuvA(4)-RuvB(12)-RuvC(2) complex forms which resolves the HJ.

It is found in the cytoplasm. It catalyses the reaction ATP + H2O = ADP + phosphate + H(+). The RuvA-RuvB-RuvC complex processes Holliday junction (HJ) DNA during genetic recombination and DNA repair, while the RuvA-RuvB complex plays an important role in the rescue of blocked DNA replication forks via replication fork reversal (RFR). RuvA specifically binds to HJ cruciform DNA, conferring on it an open structure. The RuvB hexamer acts as an ATP-dependent pump, pulling dsDNA into and through the RuvAB complex. RuvB forms 2 homohexamers on either side of HJ DNA bound by 1 or 2 RuvA tetramers; 4 subunits per hexamer contact DNA at a time. Coordinated motions by a converter formed by DNA-disengaged RuvB subunits stimulates ATP hydrolysis and nucleotide exchange. Immobilization of the converter enables RuvB to convert the ATP-contained energy into a lever motion, pulling 2 nucleotides of DNA out of the RuvA tetramer per ATP hydrolyzed, thus driving DNA branch migration. The RuvB motors rotate together with the DNA substrate, which together with the progressing nucleotide cycle form the mechanistic basis for DNA recombination by continuous HJ branch migration. Branch migration allows RuvC to scan DNA until it finds its consensus sequence, where it cleaves and resolves cruciform DNA. This Brucella suis (strain ATCC 23445 / NCTC 10510) protein is Holliday junction branch migration complex subunit RuvB.